The sequence spans 215 residues: Cytochrome b6 (215 aa).

A helical transmembrane segment spans residues 32-52 (IFYCLGGITLTCFLVQVATGF). Heme c is bound at residue C35. 2 residues coordinate heme b: H86 and H100. The next 3 membrane-spanning stretches (helical) occupy residues 90-110 (ASMM…TGGF), 116-136 (LTWV…VTGY), and 186-206 (LHTF…FPMI). The heme b site is built by H187 and H202.

Belongs to the cytochrome b family. PetB subfamily. The 4 large subunits of the cytochrome b6-f complex are cytochrome b6, subunit IV (17 kDa polypeptide, PetD), cytochrome f and the Rieske protein, while the 4 small subunits are PetG, PetL, PetM and PetN. The complex functions as a dimer. Heme b serves as cofactor. The cofactor is heme c.

The protein resides in the plastid. It is found in the chloroplast thylakoid membrane. Functionally, component of the cytochrome b6-f complex, which mediates electron transfer between photosystem II (PSII) and photosystem I (PSI), cyclic electron flow around PSI, and state transitions. The sequence is that of Cytochrome b6 from Nicotiana tomentosiformis (Tobacco).